Consider the following 465-residue polypeptide: Ribulose bisphosphate carboxylase large chain (465 aa).

Position 4 is an N6,N6,N6-trimethyllysine (Lys-4). 2 residues coordinate substrate: Asn-113 and Thr-163. Lys-165 functions as the Proton acceptor in the catalytic mechanism. Lys-167 contributes to the substrate binding site. 3 residues coordinate Mg(2+): Lys-191, Asp-193, and Glu-194. Position 191 is an N6-carboxylysine (Lys-191). The Proton acceptor role is filled by His-284. Residues Arg-285, His-317, and Ser-369 each coordinate substrate.

The protein belongs to the RuBisCO large chain family. Type I subfamily. Heterohexadecamer of 8 large chains and 8 small chains; disulfide-linked. The disulfide link is formed within the large subunit homodimers. It depends on Mg(2+) as a cofactor. Post-translationally, the disulfide bond which can form in the large chain dimeric partners within the hexadecamer appears to be associated with oxidative stress and protein turnover.

The protein localises to the plastid. The protein resides in the chloroplast. The enzyme catalyses 2 (2R)-3-phosphoglycerate + 2 H(+) = D-ribulose 1,5-bisphosphate + CO2 + H2O. It carries out the reaction D-ribulose 1,5-bisphosphate + O2 = 2-phosphoglycolate + (2R)-3-phosphoglycerate + 2 H(+). In terms of biological role, ruBisCO catalyzes two reactions: the carboxylation of D-ribulose 1,5-bisphosphate, the primary event in carbon dioxide fixation, as well as the oxidative fragmentation of the pentose substrate in the photorespiration process. Both reactions occur simultaneously and in competition at the same active site. This chain is Ribulose bisphosphate carboxylase large chain, found in Bursera inaguensis (Elaphrium inaguense).